The chain runs to 270 residues: HTH-type transcriptional repressor DrrR1 (270 aa).

Residues Met1 to Thr11 are compositionally biased toward low complexity. The tract at residues Met1–Ile28 is disordered. The HTH tetR-type domain maps to Thr49–Ser109. A DNA-binding region (H-T-H motif) is located at residues Ser72–Val91.

The protein localises to the cytoplasm. Daunorubicin and doxorubicin can induce dissociation of DrrR1 from its DNA complex. Ampicillin cannot release DrrR1 from the DNA complex at the same concentrations. Transcriptional regulator that modulates the expression of the drrA2-drrB2 genes, which encode an ABC transporter involved in daunorubicin efflux, in response to intracellular daunorubicin/doxorubicin accumulation. In the absence of daunorubicin or doxorubicin, binds directly to the drrA2-drrB2 promoter region and negatively regulates expression of the genes. In the presence of daunorubicin or doxorubicin, DrrR1 dissociates from DNA, leading to the transcription of the genes. The protein is HTH-type transcriptional repressor DrrR1 of Streptomyces coeruleorubidus.